The sequence spans 75 residues: ATP synthase subunit c (75 aa).

A run of 2 helical transmembrane segments spans residues 9–29 (IGAGLAAIALAGAGVGIGIIF) and 54–74 (FALAEATGLFGLVVALIILFA).

Belongs to the ATPase C chain family. As to quaternary structure, F-type ATPases have 2 components, F(1) - the catalytic core - and F(0) - the membrane proton channel. F(1) has five subunits: alpha(3), beta(3), gamma(1), delta(1), epsilon(1). F(0) has three main subunits: a(1), b(2) and c(10-14). The alpha and beta chains form an alternating ring which encloses part of the gamma chain. F(1) is attached to F(0) by a central stalk formed by the gamma and epsilon chains, while a peripheral stalk is formed by the delta and b chains.

The protein localises to the cell inner membrane. Functionally, f(1)F(0) ATP synthase produces ATP from ADP in the presence of a proton or sodium gradient. F-type ATPases consist of two structural domains, F(1) containing the extramembraneous catalytic core and F(0) containing the membrane proton channel, linked together by a central stalk and a peripheral stalk. During catalysis, ATP synthesis in the catalytic domain of F(1) is coupled via a rotary mechanism of the central stalk subunits to proton translocation. In terms of biological role, key component of the F(0) channel; it plays a direct role in translocation across the membrane. A homomeric c-ring of between 10-14 subunits forms the central stalk rotor element with the F(1) delta and epsilon subunits. This Pelagibacter ubique (strain HTCC1062) protein is ATP synthase subunit c.